The following is a 617-amino-acid chain: Sphingosine kinase 2 (617 aa).

Positions 1-140 are required for binding to sulfatide and phosphoinositides and for membrane localization; the sequence is MAPPPLLPVA…LSGDQEITPE (140 aa). The short motif at 87–95 is the Nuclear localization signal element; sequence RGRRGGRRR. One can recognise a DAGKc domain in the interval 143–290; it reads PRKPRLLILV…LDLLSVTLAS (148 aa). ATP contacts are provided by residues 153 to 155 and 185 to 189; these read NPF and TERQN. 210–213 contacts substrate; that stretch reads SGDG. Asp-212 serves as the catalytic Proton donor/acceptor. Residues Glu-217 and 242–244 each bind ATP; that span reads GSG. Asp-309 lines the substrate pocket. Residues Arg-316 and Arg-322 each contribute to the ATP site. Phosphoserine occurs at positions 358 and 364. Positions 371–472 are disordered; that stretch reads APAPAATHSP…GFLPPTHSAP (102 aa). Thr-377 carries the phosphothreonine modification. A Nuclear export signal motif is present at residues 381–390; it reads LHRSVSDLPL. Residues Ser-384 and Ser-386 each carry the phosphoserine modification. Residues 412 to 426 are compositionally biased toward gly residues; the sequence is NGGGPELTGDWGGAG. Position 578 is a phosphothreonine (Thr-578). 586–588 contributes to the ATP binding site; that stretch reads DGE.

Interacts with histone H3. Interacts with HDAC1, HDAC2, MBD2 and SIN3A. Interacts with EEF1A1; the interaction enhances SPHK2 kinase activity. Interacts with PHB2. Mg(2+) is required as a cofactor. Post-translationally, phosphorylated by PKD on Ser-384 and Ser-386 upon PMA treatment. Phosphorylation induces export from the nucleus to the cytoplasm. Phosphorylated by MAPK1 and MAPK2 at Thr-578, phosphorylation is induced by agonists such as EGF and PMA and increases kinase activity. In terms of processing, cleaved by CASP1 in apoptotic cells. The truncated form is released from cells. Expressed in heart, brain, liver, kidney and testis. Expressed by mast cells (at protein level). In the substantia nigra, expressed by dopaminergic neurons (at protein level).

It is found in the lysosome membrane. Its subcellular location is the cytoplasm. It localises to the cell membrane. The protein localises to the endoplasmic reticulum. The protein resides in the nucleus. It is found in the mitochondrion inner membrane. It carries out the reaction a sphingoid base + ATP = a sphingoid 1-phosphate + ADP + H(+). The catalysed reaction is sphing-4-enine + ATP = sphing-4-enine 1-phosphate + ADP + H(+). The enzyme catalyses sphinganine + ATP = sphinganine 1-phosphate + ADP + H(+). It catalyses the reaction (4R)-hydroxysphinganine + ATP = (4R)-hydroxysphinganine 1-phosphate + ADP + H(+). Functionally, catalyzes the phosphorylation of sphingosine to form sphingosine-1-phosphate (SPP), a lipid mediator with both intra- and extracellular functions. Also acts on D-erythro-dihydrosphingosine, D-erythro-sphingosine and L-threo-dihydrosphingosine. Binds phosphoinositides. In contrast to prosurvival SPHK1, has a positive effect on intracellular ceramide levels, inhibits cells growth and enhances apoptosis. In mitochondria, is important for cytochrome-c oxidase assembly and mitochondrial respiration. The SPP produced in mitochondria binds PHB2 and modulates the regulation via PHB2 of complex IV assembly and respiration. In nucleus, plays a role in epigenetic regulation of gene expression. Interacts with HDAC1 and HDAC2 and, through SPP production, inhibits their enzymatic activity, preventing the removal of acetyl groups from lysine residues with histones. Up-regulates acetylation of histone H3-K9, histone H4-K5 and histone H2B-K12. In nucleus, may have an inhibitory effect on DNA synthesis and cell cycle. In mast cells, is the main regulator of SPP production which mediates calcium influx, NF-kappa-B activation, cytokine production, such as TNF and IL6, and degranulation of mast cells. In dopaminergic neurons, is involved in promoting mitochondrial functions regulating ATP and ROS levels. Also involved in the regulation of glucose and lipid metabolism. The protein is Sphingosine kinase 2 of Mus musculus (Mouse).